Reading from the N-terminus, the 202-residue chain is UPF0301 protein mlr7511 (202 aa).

Belongs to the UPF0301 (AlgH) family.

This is UPF0301 protein mlr7511 from Mesorhizobium japonicum (strain LMG 29417 / CECT 9101 / MAFF 303099) (Mesorhizobium loti (strain MAFF 303099)).